The primary structure comprises 440 residues: 6-phospho-alpha-glucosidase (440 aa).

4-70 contacts NAD(+); sequence FSVVIAGGGS…PEIEFSYTTD (67 aa). Substrate contacts are provided by Arg93 and Asn147. Cys169 is a binding site for Mn(2+). Catalysis depends on Asp170, which acts as the Proton donor. Position 200 (His200) interacts with Mn(2+). The Proton acceptor role is filled by Tyr263. Arg283 provides a ligand contact to substrate.

Homodimer. The cofactor is NAD(+). Requires Mn(2+) as cofactor. Co(2+) serves as cofactor. Ni(2+) is required as a cofactor.

The catalysed reaction is alpha-maltose 6'-phosphate + H2O = D-glucose 6-phosphate + D-glucose. It functions in the pathway glycan biosynthesis; sucrose metabolism. Its function is as follows. Is involved in the catabolism of alpha-glycosides accumulated via a phosphoenolpyruvate-dependent phosphotransferase system (PEP-PTS). Hydrolyzes a wide variety of 6-phospho-alpha-D-glucosides including maltose-6'-phosphate, isomaltose-6'-phosphate, maltitol-6-phosphate, trehalose-6-phosphate and the 6'-phosphorylated derivatives of the five linkage-isomeric alpha-D-glucosyl-D-fructoses: trehalulose-6'-phosphate, turanose-6'-phosphate, maltulose-6'-phosphate, leucrose-6'-phosphate, and palatinose-6'-phosphate. However, sucrose-6-phosphate is not a substrate for this enzyme. This chain is 6-phospho-alpha-glucosidase, found in Klebsiella pneumoniae.